The chain runs to 397 residues: Inositol 3-kinase (397 aa).

ATP-binding positions include Ser-228, 278-281, and Asn-305; that span reads GAGD. The active-site Proton acceptor is the Asp-281.

It belongs to the carbohydrate kinase pfkB family. As to expression, expressed in roots, leaf blade shoots, leaf sheath shoots and panicles.

It catalyses the reaction myo-inositol + ATP = 1D-myo-inositol 3-phosphate + ADP + H(+). Kinase that phosphorylates myo-inositol to produce multiple myo-inositol monophosphates. Participates in phytic acid biosynthesis in developing seeds. Phytic acid is the primary storage form of phosphorus in cereal grains and other plant seeds. This is Inositol 3-kinase from Oryza sativa subsp. japonica (Rice).